A 176-amino-acid chain; its full sequence is Ribosome maturation factor RimM (176 aa).

Residues 95-169 (EDEVYLFELE…TARIAPPPGL (75 aa)) form the PRC barrel domain.

Belongs to the RimM family. In terms of assembly, binds ribosomal protein uS19.

Its subcellular location is the cytoplasm. In terms of biological role, an accessory protein needed during the final step in the assembly of 30S ribosomal subunit, possibly for assembly of the head region. Essential for efficient processing of 16S rRNA. May be needed both before and after RbfA during the maturation of 16S rRNA. It has affinity for free ribosomal 30S subunits but not for 70S ribosomes. This Nitratidesulfovibrio vulgaris (strain ATCC 29579 / DSM 644 / CCUG 34227 / NCIMB 8303 / VKM B-1760 / Hildenborough) (Desulfovibrio vulgaris) protein is Ribosome maturation factor RimM.